Reading from the N-terminus, the 585-residue chain is ATP-dependent lipid A-core flippase (585 aa).

The next 6 helical transmembrane spans lie at 18–38 (LWPT…ALVL), 68–88 (LMAV…FISS), 142–162 (SNAL…LAVM), 163–183 (IATS…IAVL), 255–275 (PIVQ…ATIP), and 277–297 (IMSQ…MLAM). The ABC transmembrane type-1 domain maps to 30-313 (IAAAAALVLN…LTNVNSQFQR (284 aa)). The ABC transporter domain maps to 345-581 (VSFKDVSFTY…NGAYKQLHKM (237 aa)). Position 379-386 (379-386 (GRSGSGKS)) interacts with ATP.

The protein belongs to the ABC transporter superfamily. Lipid exporter (TC 3.A.1.106) family. In terms of assembly, homodimer.

The protein resides in the cell inner membrane. It carries out the reaction ATP + H2O + lipid A-core oligosaccharideSide 1 = ADP + phosphate + lipid A-core oligosaccharideSide 2.. Functionally, involved in lipopolysaccharide (LPS) biosynthesis. Translocates lipid A-core from the inner to the outer leaflet of the inner membrane. Transmembrane domains (TMD) form a pore in the inner membrane and the ATP-binding domain (NBD) is responsible for energy generation. This Mannheimia succiniciproducens (strain KCTC 0769BP / MBEL55E) protein is ATP-dependent lipid A-core flippase.